A 334-amino-acid chain; its full sequence is Holliday junction branch migration complex subunit RuvB (334 aa).

The large ATPase domain (RuvB-L) stretch occupies residues 4 to 184 (ADRLISAAVI…FGIVQRLEFY (181 aa)). ATP contacts are provided by residues I23, R24, G65, K68, T69, T70, 131–133 (EDY), R174, Y184, and R221. T69 provides a ligand contact to Mg(2+). The small ATPAse domain (RuvB-S) stretch occupies residues 185–255 (QVADLEHIVS…VAMKALDMLN (71 aa)). The tract at residues 258–334 (AEGFDFMDRK…YKHFGITREE (77 aa)) is head domain (RuvB-H). DNA contacts are provided by R294, R313, and R318.

The protein belongs to the RuvB family. As to quaternary structure, homohexamer. Forms an RuvA(8)-RuvB(12)-Holliday junction (HJ) complex. HJ DNA is sandwiched between 2 RuvA tetramers; dsDNA enters through RuvA and exits via RuvB. An RuvB hexamer assembles on each DNA strand where it exits the tetramer. Each RuvB hexamer is contacted by two RuvA subunits (via domain III) on 2 adjacent RuvB subunits; this complex drives branch migration. In the full resolvosome a probable DNA-RuvA(4)-RuvB(12)-RuvC(2) complex forms which resolves the HJ.

It is found in the cytoplasm. The enzyme catalyses ATP + H2O = ADP + phosphate + H(+). In terms of biological role, the RuvA-RuvB-RuvC complex processes Holliday junction (HJ) DNA during genetic recombination and DNA repair, while the RuvA-RuvB complex plays an important role in the rescue of blocked DNA replication forks via replication fork reversal (RFR). RuvA specifically binds to HJ cruciform DNA, conferring on it an open structure. The RuvB hexamer acts as an ATP-dependent pump, pulling dsDNA into and through the RuvAB complex. RuvB forms 2 homohexamers on either side of HJ DNA bound by 1 or 2 RuvA tetramers; 4 subunits per hexamer contact DNA at a time. Coordinated motions by a converter formed by DNA-disengaged RuvB subunits stimulates ATP hydrolysis and nucleotide exchange. Immobilization of the converter enables RuvB to convert the ATP-contained energy into a lever motion, pulling 2 nucleotides of DNA out of the RuvA tetramer per ATP hydrolyzed, thus driving DNA branch migration. The RuvB motors rotate together with the DNA substrate, which together with the progressing nucleotide cycle form the mechanistic basis for DNA recombination by continuous HJ branch migration. Branch migration allows RuvC to scan DNA until it finds its consensus sequence, where it cleaves and resolves cruciform DNA. This is Holliday junction branch migration complex subunit RuvB from Yersinia pseudotuberculosis serotype O:1b (strain IP 31758).